The chain runs to 303 residues: Diaminopimelate epimerase (303 aa).

Asparagine 15, glutamine 47, and asparagine 67 together coordinate substrate. Cysteine 76 acts as the Proton donor in catalysis. Substrate-binding positions include 77–78, asparagine 163, asparagine 197, and 215–216; these read GN and ER. Cysteine 224 functions as the Proton acceptor in the catalytic mechanism. 225–226 contacts substrate; it reads GS. The segment at 278 to 303 is disordered; the sequence is FDPATGEWSRDTQGLQGSGNADRGAA.

Belongs to the diaminopimelate epimerase family. In terms of assembly, homodimer.

It localises to the cytoplasm. It carries out the reaction (2S,6S)-2,6-diaminopimelate = meso-2,6-diaminopimelate. It functions in the pathway amino-acid biosynthesis; L-lysine biosynthesis via DAP pathway; DL-2,6-diaminopimelate from LL-2,6-diaminopimelate: step 1/1. Its function is as follows. Catalyzes the stereoinversion of LL-2,6-diaminopimelate (L,L-DAP) to meso-diaminopimelate (meso-DAP), a precursor of L-lysine and an essential component of the bacterial peptidoglycan. In Brucella melitensis biotype 1 (strain ATCC 23456 / CCUG 17765 / NCTC 10094 / 16M), this protein is Diaminopimelate epimerase.